Consider the following 439-residue polypeptide: Ornithine aminotransferase, mitochondrial (439 aa).

The transit peptide at 1-35 (MLSKLASLQTVAALRRGLRTSVASATSVATKKTEQ) directs the protein to the mitochondrion. N6-acetyllysine is present on residues Lys-49 and Lys-66. Lys-102 carries the N6-succinyllysine modification. Residue Lys-107 is modified to N6-acetyllysine; alternate. An N6-succinyllysine; alternate modification is found at Lys-107. An N6-(pyridoxal phosphate)lysine modification is found at Lys-292. Lys-362 is modified (N6-acetyllysine; alternate). Lys-362 carries the post-translational modification N6-succinyllysine; alternate. N6-acetyllysine occurs at positions 386 and 392. Lys-405 is modified (N6-acetyllysine; alternate). The residue at position 405 (Lys-405) is an N6-succinyllysine; alternate. Residue Lys-421 is modified to N6-acetyllysine.

As to quaternary structure, homohexamer. Requires pyridoxal 5'-phosphate as cofactor. As to expression, expressed in the head and flagellum of epididymal sperm but not in testicular sperm (at protein level).

The protein localises to the mitochondrion matrix. It carries out the reaction L-ornithine + 2-oxoglutarate = L-glutamate 5-semialdehyde + L-glutamate. The protein operates within amino-acid biosynthesis; L-proline biosynthesis; L-glutamate 5-semialdehyde from L-ornithine: step 1/1. Catalyzes the reversible interconversion of L-ornithine and 2-oxoglutarate to L-glutamate semialdehyde and L-glutamate. This is Ornithine aminotransferase, mitochondrial (Oat) from Rattus norvegicus (Rat).